Here is a 59-residue protein sequence, read N- to C-terminus: Large ribosomal subunit protein bL32 (59 aa).

It belongs to the bacterial ribosomal protein bL32 family.

This is Large ribosomal subunit protein bL32 from Limosilactobacillus reuteri (strain DSM 20016) (Lactobacillus reuteri).